Here is a 145-residue protein sequence, read N- to C-terminus: Cell division protein SepF (145 aa).

Positions Pro23 to Pro41 are enriched in basic and acidic residues. The interval Pro23–Lys42 is disordered.

Belongs to the SepF family. As to quaternary structure, homodimer. Interacts with FtsZ.

It localises to the cytoplasm. In terms of biological role, cell division protein that is part of the divisome complex and is recruited early to the Z-ring. Probably stimulates Z-ring formation, perhaps through the cross-linking of FtsZ protofilaments. Its function overlaps with FtsA. The sequence is that of Cell division protein SepF from Caldicellulosiruptor bescii (strain ATCC BAA-1888 / DSM 6725 / KCTC 15123 / Z-1320) (Anaerocellum thermophilum).